We begin with the raw amino-acid sequence, 433 residues long: 3-phosphoshikimate 1-carboxyvinyltransferase (433 aa).

3-phosphoshikimate is bound by residues Lys22, Ser23, and Arg27. Position 22 (Lys22) interacts with phosphoenolpyruvate. Phosphoenolpyruvate-binding residues include Gly94 and Arg123. Ser168, Gln170, Asp319, and Lys346 together coordinate 3-phosphoshikimate. Gln170 provides a ligand contact to phosphoenolpyruvate. Asp319 functions as the Proton acceptor in the catalytic mechanism. Phosphoenolpyruvate-binding residues include Arg350 and Arg392.

This sequence belongs to the EPSP synthase family. In terms of assembly, monomer.

It is found in the cytoplasm. It carries out the reaction 3-phosphoshikimate + phosphoenolpyruvate = 5-O-(1-carboxyvinyl)-3-phosphoshikimate + phosphate. It participates in metabolic intermediate biosynthesis; chorismate biosynthesis; chorismate from D-erythrose 4-phosphate and phosphoenolpyruvate: step 6/7. Functionally, catalyzes the transfer of the enolpyruvyl moiety of phosphoenolpyruvate (PEP) to the 5-hydroxyl of shikimate-3-phosphate (S3P) to produce enolpyruvyl shikimate-3-phosphate and inorganic phosphate. The sequence is that of 3-phosphoshikimate 1-carboxyvinyltransferase from Roseiflexus sp. (strain RS-1).